Consider the following 40-residue polypeptide: Bomanin Short 6 (40 aa).

A signal peptide spans 1-18; it reads MKLLSITFLFGLLALASA. Residues 19 to 23 constitute a propeptide, removed by a dipeptidylpeptidase; that stretch reads NPLSP. Cysteines 32 and 35 form a disulfide.

Belongs to the bomanin family.

The protein resides in the secreted. Secreted immune-induced peptide induced by Toll signaling. Has a role in resistance to bacterial and fungal infections. The strength of antimicrobial activity appears to correlate with the overall level of expression. The chain is Bomanin Short 6 from Drosophila melanogaster (Fruit fly).